The sequence spans 369 residues: MLMKTTAAHAPASQGTSGIVLDSLRVAYHGNVVLKPLSLTIEPGEVLALIGPSGSGKTTVLRAVAGFVQPAGGRILIGDTDVTHLPPYKRGLAMVVQNYALFPHLKVEDNVAFGLRAQKQPKALINERVTQALKTVGMSDYATRYPHQLSGGQQQRVAIARAIAVRPRVLLLDEPLSALDAQIRHNMVEEIARLHRELPELTILYVTHDQTEALTLADKIGIMKDGSLIAHGETRALYHHPPNRFAAEFLGRANILSAIALGITEVPGLVDVSCGGAVIRAFSQGSHHGYNKLLCIRPQHLSLTPRSAYSNRFNATLQSVHWQGDLTHLLCDVAGETVRMVLTHVNPLPRVGDKLALWFEPDDAVLIEV.

The 232-residue stretch at 19–250 (IVLDSLRVAY…PPNRFAAEFL (232 aa)) folds into the ABC transporter domain. Residue 51-58 (GPSGSGKT) coordinates ATP.

The protein belongs to the ABC transporter superfamily. 2-aminoethylphosphonate importer (TC 3.A.1.11.5) family.

The protein localises to the cell inner membrane. Probably part of the PhnSTUV complex (TC 3.A.1.11.5) involved in 2-aminoethylphosphonate import. Probably responsible for energy coupling to the transport system. The protein is Putative 2-aminoethylphosphonate import ATP-binding protein PhnT (phnT) of Salmonella paratyphi A (strain ATCC 9150 / SARB42).